A 661-amino-acid polypeptide reads, in one-letter code: UvrABC system protein B (661 aa).

A Helicase ATP-binding domain is found at 24–209 (NGLNKGYRFQ…IFPSYQDEGI (186 aa)). 37-44 (GVTGSGKT) contacts ATP. The short motif at 90–113 (YYDYYQPEAYVPTKDLYIEKSADI) is the Beta-hairpin element. Residues 430-594 (DLVNEIVQVK…IIKPLMEDIF (165 aa)) enclose the Helicase C-terminal domain. Residues 622-657 (EEYAALLEEEMYKAASELRYEDAARLRDELFKIKEE) enclose the UVR domain.

The protein belongs to the UvrB family. In terms of assembly, forms a heterotetramer with UvrA during the search for lesions. Interacts with UvrC in an incision complex.

The protein localises to the cytoplasm. In terms of biological role, the UvrABC repair system catalyzes the recognition and processing of DNA lesions. A damage recognition complex composed of 2 UvrA and 2 UvrB subunits scans DNA for abnormalities. Upon binding of the UvrA(2)B(2) complex to a putative damaged site, the DNA wraps around one UvrB monomer. DNA wrap is dependent on ATP binding by UvrB and probably causes local melting of the DNA helix, facilitating insertion of UvrB beta-hairpin between the DNA strands. Then UvrB probes one DNA strand for the presence of a lesion. If a lesion is found the UvrA subunits dissociate and the UvrB-DNA preincision complex is formed. This complex is subsequently bound by UvrC and the second UvrB is released. If no lesion is found, the DNA wraps around the other UvrB subunit that will check the other stand for damage. The polypeptide is UvrABC system protein B (Fervidobacterium nodosum (strain ATCC 35602 / DSM 5306 / Rt17-B1)).